Here is a 458-residue protein sequence, read N- to C-terminus: UPF0210 protein MmarC6_1246 (458 aa).

It belongs to the UPF0210 family.

This is UPF0210 protein MmarC6_1246 from Methanococcus maripaludis (strain C6 / ATCC BAA-1332).